Reading from the N-terminus, the 388-residue chain is Protein DJ-1 homolog D (388 aa).

PfpI endopeptidase domains lie at arginine 5–glycine 190 and lysine 198–glycine 383. Residue cysteine 120 is the Nucleophile of the active site. Cysteine 120 carries the cysteine sulfenic acid (-SOH) modification. Residue histidine 121 is part of the active site. The active-site Nucleophile is the cysteine 313. Position 313 is a cysteine sulfinic acid (-SO2H) (cysteine 313). Residue histidine 314 is part of the active site.

It belongs to the peptidase C56 family. In terms of assembly, homotrimer. Post-translationally, cys-120 and Cys-313 are oxidized to sulfinic acid.

The enzyme catalyses (R)-S-lactoylglutathione = methylglyoxal + glutathione. Functionally, possesses glyoxalase I activity. Catalyzes the conversion of hemimercaptal, formed from methylglyoxal and glutathione, to S-lactoylglutathione. May be involved in oxidative stress response. The protein is Protein DJ-1 homolog D (DJ1D) of Arabidopsis thaliana (Mouse-ear cress).